Consider the following 417-residue polypeptide: Inhibitor of growth protein 3 (417 aa).

3 disordered regions span residues leucine 126–lysine 165, serine 177–asparagine 198, and glutamine 284–leucine 320. Over residues histidine 136–serine 152 the composition is skewed to basic residues. The span at serine 156–lysine 165 shows a compositional bias: basic and acidic residues. Residues serine 177 to cysteine 187 show a composition bias toward polar residues. 3 stretches are compositionally biased toward low complexity: residues asparagine 189 to asparagine 198, glutamine 284 to serine 294, and asparagine 303 to leucine 320. The segment at proline 359–alanine 408 adopts a PHD-type zinc-finger fold. Residues cysteine 362, cysteine 364, cysteine 375, cysteine 380, histidine 386, cysteine 389, cysteine 402, and cysteine 405 each contribute to the Zn(2+) site.

The protein belongs to the ING family. In terms of assembly, interacts with H3K4me3 and to a lesser extent with H3K4me2. Component of the NuA4 histone acetyltransferase complex.

It is found in the nucleus. In terms of biological role, component of the NuA4 histone acetyltransferase (HAT) complex which is involved in transcriptional activation of select genes principally by acetylation of nucleosomal histone H4 and H2A. This modification may both alter nucleosome - DNA interactions and promote interaction of the modified histones with other proteins which positively regulate transcription. NuA4 may also play a direct role in DNA repair when directly recruited to sites of DNA damage. This chain is Inhibitor of growth protein 3 (ing3), found in Xenopus tropicalis (Western clawed frog).